The primary structure comprises 121 residues: MNNAPHLYFAWQQLVEKSQLMLRLATEEQWDELIASEMAYVNAVQEIAHLTEEVEPSTTMQEQLRPMLHLILDNESKVKQLLQIRMDELAKLVGQSSVQKSVLSAYGDQGGFVLAPQDNLF.

The interval 1–50 (MNNAPHLYFAWQQLVEKSQLMLRLATEEQWDELIASEMAYVNAVQEIAHL) is required for homodimerization. The segment at 60 to 98 (MQEQLRPMLHLILDNESKVKQLLQIRMDELAKLVGQSSV) is fliD binding.

This sequence belongs to the FliT family. In terms of assembly, homodimer. Interacts with FliD and FlhC.

It localises to the cytoplasm. It is found in the cytosol. Its function is as follows. Dual-function protein that regulates the transcription of class 2 flagellar operons and that also acts as an export chaperone for the filament-capping protein FliD. As a transcriptional regulator, acts as an anti-FlhDC factor; it directly binds FlhC, thus inhibiting the binding of the FlhC/FlhD complex to class 2 promoters, resulting in decreased expression of class 2 flagellar operons. As a chaperone, effects FliD transition to the membrane by preventing its premature polymerization, and by directing it to the export apparatus. The protein is Flagellar protein FliT of Escherichia coli O17:K52:H18 (strain UMN026 / ExPEC).